The sequence spans 408 residues: Prenyltransferase criF (408 aa).

10 residues coordinate dimethylallyl diphosphate: R94, K181, Y183, R248, K250, Y252, Q334, Y336, Y400, and Y404.

It belongs to the tryptophan dimethylallyltransferase family. As to quaternary structure, homodimer.

The catalysed reaction is preechinulin + dimethylallyl diphosphate = tardioxopiperazine B + diphosphate. It catalyses the reaction preechinulin + dimethylallyl diphosphate = tardioxopiperazine A + diphosphate. It carries out the reaction tardioxopiperazine A + dimethylallyl diphosphate = echinulin + diphosphate. The enzyme catalyses tardioxopiperazine A + dimethylallyl diphosphate = variecolorin L + diphosphate. The catalysed reaction is neoechinulin A + dimethylallyl diphosphate = variecolorin G + diphosphate. It catalyses the reaction neoechinulin A + dimethylallyl diphosphate = isoechinulin A + diphosphate. It carries out the reaction isoechinulin A + dimethylallyl diphosphate = dehydroechinulin + diphosphate. The enzyme catalyses neoechinulin B + dimethylallyl diphosphate = isoechinulin B + diphosphate. It participates in secondary metabolite biosynthesis. Its pathway is alkaloid biosynthesis. In terms of biological role, prenyltransferase; part of the gene cluster that mediates the biosynthesis of echinulin family alkaloid. The pathway begins with the biosynthesis of the cyclic dipeptide cyclo-L-Trp-L-Ala (cyclo-TA) by the NRPS criC via condensation of L-alanine and L-tryptophan. The prenyltransferase criA then catalyzes the first prenylation step, a reverse prenylation reaction at C2, to yield preechinulin. Preechinulin is the substrate of the cytochrome P450 monooxygenase criE that catalyzes the formation of the double bond between C10 and C11 to produce neoechulin A. The unique prenyltransferase criF functions as a competitive enzyme with criE for preechinulin metabolization and uses preechinulin for effective regiospecific prenylations. Preechinulin is prenylated by criF at C5 or C7. C7-prenylation leads to accumulation of tardioxopiperazine B without further modification by criF. In contrast, the C5-prenylated tardioxopiperazine A can be prenylated again by criF, predominantly at C7 to form echinulin or less frequently at C4 to give variecolorin L. CriF also accepts neoechilunin A to produce varlecolorin G (prenylation at C5) or isoechinulin A (prenylation at C7). CriF further converts isoechinulin A into dehydroechinulin. Moreover, a yet unidentified enzyme can also convert neoechilunin A into neoechilunin B by introducing a double bond between positions C14 and C17 and thus provides a further substrate to criF for C5 and C7 prenylation. This is Prenyltransferase criF from Aspergillus cristatus (Chinese Fuzhuan brick tea-fermentation fungus).